Here is a 485-residue protein sequence, read N- to C-terminus: Protein DETOXIFICATION 14 (485 aa).

12 consecutive transmembrane segments (helical) span residues 30–50, 68–88, 112–132, 147–167, 175–195, 207–227, 259–279, 288–308, 329–349, 372–392, 405–425, and 432–452; these read LSYI…LQVI, IAVS…ASAL, IVSL…IGDI, GKFA…QPLV, LILP…VLCW, GAAI…GLYM, ASMI…SGIL, VLSV…SLGA, AVYT…AIVF, MAPL…LSGV, VNLA…AFGF, and LWIG…LIVI.

Belongs to the multi antimicrobial extrusion (MATE) (TC 2.A.66.1) family.

It is found in the membrane. This Arabidopsis thaliana (Mouse-ear cress) protein is Protein DETOXIFICATION 14.